The primary structure comprises 396 residues: Enoyl-[acyl-carrier-protein] reductase [NADH] (396 aa).

NAD(+) contacts are provided by residues 47–52 (GASTGF), 73–74 (FE), 110–111 (DA), and 138–139 (LA). Tyrosine 224 contacts substrate. Catalysis depends on tyrosine 234, which acts as the Proton donor. NAD(+)-binding positions include lysine 243 and 272-274 (LVT).

This sequence belongs to the TER reductase family. In terms of assembly, monomer.

The catalysed reaction is a 2,3-saturated acyl-[ACP] + NAD(+) = a (2E)-enoyl-[ACP] + NADH + H(+). It participates in lipid metabolism; fatty acid biosynthesis. In terms of biological role, involved in the final reduction of the elongation cycle of fatty acid synthesis (FAS II). Catalyzes the reduction of a carbon-carbon double bond in an enoyl moiety that is covalently linked to an acyl carrier protein (ACP). This Flavobacterium psychrophilum (strain ATCC 49511 / DSM 21280 / CIP 103535 / JIP02/86) protein is Enoyl-[acyl-carrier-protein] reductase [NADH].